We begin with the raw amino-acid sequence, 330 residues long: mRNA-capping enzyme (330 aa).

Lysine 82 functions as the N6-GMP-lysine intermediate in the catalytic mechanism.

It belongs to the eukaryotic GTase family. As to quaternary structure, monomer. The cofactor is Mg(2+). It depends on Mn(2+) as a cofactor.

The catalysed reaction is a 5'-end diphospho-ribonucleoside in mRNA + GTP + H(+) = a 5'-end (5'-triphosphoguanosine)-ribonucleoside in mRNA + diphosphate. Its function is as follows. mRNA capping. Transfers a GMP cap onto the end of mRNA that terminates with a 5'-diphosphate tail. The sequence is that of mRNA-capping enzyme from Chlorella (PBCV-1).